Reading from the N-terminus, the 349-residue chain is Isopentenyl-diphosphate delta-isomerase (349 aa).

6 to 7 (RK) contributes to the substrate binding site. Residues 62 to 64 (AMT), S93, and N122 contribute to the FMN site. Q152 serves as a coordination point for substrate. Mg(2+) is bound at residue E153. FMN is bound by residues K184, T214, 258–259 (GG), and 280–281 (AG).

The protein belongs to the IPP isomerase type 2 family. Homooctamer. Dimer of tetramers. The cofactor is FMN. Requires NADPH as cofactor. Mg(2+) is required as a cofactor.

Its subcellular location is the cytoplasm. It carries out the reaction isopentenyl diphosphate = dimethylallyl diphosphate. Involved in the biosynthesis of isoprenoids. Catalyzes the 1,3-allylic rearrangement of the homoallylic substrate isopentenyl (IPP) to its allylic isomer, dimethylallyl diphosphate (DMAPP). The protein is Isopentenyl-diphosphate delta-isomerase of Bacillus subtilis (strain 168).